Reading from the N-terminus, the 440-residue chain is Xylose isomerase (440 aa).

Catalysis depends on residues His100 and Asp103. Glu231, Glu267, His270, Asp295, Asp306, Asp308, and Asp338 together coordinate Mg(2+).

It belongs to the xylose isomerase family. In terms of assembly, homotetramer. Requires Mg(2+) as cofactor.

Its subcellular location is the cytoplasm. The enzyme catalyses alpha-D-xylose = alpha-D-xylulofuranose. This is Xylose isomerase from Paraburkholderia phytofirmans (strain DSM 17436 / LMG 22146 / PsJN) (Burkholderia phytofirmans).